The sequence spans 617 residues: Thioredoxin reductase (617 aa).

Residues 127–128 (PG), 147–150 (DYVK), 163–164 (TC), 168–172 (GCVPK), alanine 237, aspartate 433, and 440–442 (ELA) contribute to the FAD site. The cysteines at positions 164 and 169 are disulfide-linked. The loop important for the interaction with TRX1 stretch occupies residues 514 to 528 (HRQKHIRAQKDEYDL). Residue histidine 585 participates in FAD binding. Histidine 585 functions as the Proton acceptor in the catalytic mechanism. A disulfide bridge connects residues cysteine 611 and cysteine 616.

It belongs to the class-I pyridine nucleotide-disulfide oxidoreductase family. As to quaternary structure, homodimer. FAD serves as cofactor.

The protein localises to the mitochondrion. The protein resides in the cytoplasm. The enzyme catalyses [thioredoxin]-dithiol + NADP(+) = [thioredoxin]-disulfide + NADPH + H(+). Its function is as follows. Catalyzes the transfer of electrons from NADPH to thioredoxins TRX1, TRX2 and TRX3, which in turn act as reductants of disulfide containing proteins. Able to reduce nitroglutathione (GSNO), a compound involved in the transport of nitric oxide (NO); however, TRX1 is more efficient in reducing GSNO. Has no catalytic activity towards oxidized glutathione (GSSG). The sequence is that of Thioredoxin reductase from Plasmodium falciparum (isolate 3D7).